The following is a 249-amino-acid chain: Uridylate kinase (249 aa).

K21 to G24 serves as a coordination point for ATP. A UMP-binding site is contributed by G63. ATP-binding residues include G64 and R68. UMP is bound by residues D84 and T145–T152. Residues T172, Y178, and D181 each coordinate ATP.

This sequence belongs to the UMP kinase family. In terms of assembly, homohexamer.

The protein resides in the cytoplasm. It carries out the reaction UMP + ATP = UDP + ADP. It participates in pyrimidine metabolism; CTP biosynthesis via de novo pathway; UDP from UMP (UMPK route): step 1/1. With respect to regulation, inhibited by UTP. Functionally, catalyzes the reversible phosphorylation of UMP to UDP. In Francisella tularensis subsp. tularensis (strain FSC 198), this protein is Uridylate kinase.